The chain runs to 68 residues: Conotoxin Vx2 (68 aa).

The signal sequence occupies residues 1-20; it reads MMSKLGVLVTICLLLFPLTA. Residues 21 to 47 constitute a propeptide that is removed on maturation; it reads LPLDGDQPADHPAKRTQDHNLASPISA. Intrachain disulfides connect Cys55-Cys68, Cys56-Cys61, and Cys57-Cys65.

This sequence belongs to the conotoxin M superfamily. As to expression, expressed by the venom duct.

It localises to the secreted. In terms of biological role, in vivo, elicits a series of symptoms, such as being sedative, tail stiffening and twisted jumping, when injected intracranially into mice. This Conus vexillum (Flag cone) protein is Conotoxin Vx2.